The chain runs to 433 residues: MSQTNTTDVTAYMQNVGKEARAASRALAAANTGDKNAALMAIHDVLKNAKQDILAANTVDMDNGQKNDLDAALLDRLELNDARFDGMLQGLKDVAALPDPIGEVTDMTYRPSGIHLGKMRVPLGVVGMIYESRPNVTLEAASLALKSGNAIILRGGSEAFESNQAIAKCILEGLKNVGMSEYSVQVLETTDRAAVGELITMTEYVDVIVPRGGKGLIERISRDARVPVIKHLDGNCHTFIDSDADPEIAINVSVNAKTHRYGTCNTMETLLVDEAIADELLPKIAEAIVEADNAMQLRLDDKAQAILNDNTILKGHLSAATAEDWDTEYLAPILAIKILSGIDEAIEHINTHGSHHTDVIITDNYTKSQRFIREVDSASVMINASSRFADGFEYGLGAEIGISTDKIHARGPVGLEGLTSQKWIVYGHGETRA.

Belongs to the gamma-glutamyl phosphate reductase family.

The protein localises to the cytoplasm. It catalyses the reaction L-glutamate 5-semialdehyde + phosphate + NADP(+) = L-glutamyl 5-phosphate + NADPH + H(+). It participates in amino-acid biosynthesis; L-proline biosynthesis; L-glutamate 5-semialdehyde from L-glutamate: step 2/2. In terms of biological role, catalyzes the NADPH-dependent reduction of L-glutamate 5-phosphate into L-glutamate 5-semialdehyde and phosphate. The product spontaneously undergoes cyclization to form 1-pyrroline-5-carboxylate. In Psychrobacter cryohalolentis (strain ATCC BAA-1226 / DSM 17306 / VKM B-2378 / K5), this protein is Gamma-glutamyl phosphate reductase.